The primary structure comprises 512 residues: tRNA-2-methylthio-N(6)-dimethylallyladenosine synthase (512 aa).

Residues 17–133 (RTYEVRTFGC…LPTLLERSAH (117 aa)) enclose the MTTase N-terminal domain. 6 residues coordinate [4Fe-4S] cluster: Cys26, Cys62, Cys96, Cys170, Cys174, and Cys177. Positions 156–392 (RESAYAGWVS…LALQERISEE (237 aa)) constitute a Radical SAM core domain. The region spanning 395–461 (RKLIGTTQEL…PHFLIADGGV (67 aa)) is the TRAM domain. Residues 473 to 512 (TELGETPTTAPVGVGLGMPSIKKPEPTTAGGCSTGGCGCE) are disordered.

The protein belongs to the methylthiotransferase family. MiaB subfamily. Monomer. [4Fe-4S] cluster serves as cofactor.

Its subcellular location is the cytoplasm. It catalyses the reaction N(6)-dimethylallyladenosine(37) in tRNA + (sulfur carrier)-SH + AH2 + 2 S-adenosyl-L-methionine = 2-methylsulfanyl-N(6)-dimethylallyladenosine(37) in tRNA + (sulfur carrier)-H + 5'-deoxyadenosine + L-methionine + A + S-adenosyl-L-homocysteine + 2 H(+). Catalyzes the methylthiolation of N6-(dimethylallyl)adenosine (i(6)A), leading to the formation of 2-methylthio-N6-(dimethylallyl)adenosine (ms(2)i(6)A) at position 37 in tRNAs that read codons beginning with uridine. The chain is tRNA-2-methylthio-N(6)-dimethylallyladenosine synthase from Corynebacterium jeikeium (strain K411).